Here is a 401-residue protein sequence, read N- to C-terminus: Nicotinamide/nicotinic acid mononucleotide adenylyltransferase 1 (401 aa).

Disordered stretches follow at residues 1–30 and 48–123; these read MDPT…KIPK and APFN…RGVQ. Residues 52-69 are compositionally biased toward basic residues; sequence IKRKKKHPKHHHHHHHSR. A phosphoserine mark is found at S91, S95, S96, and S111. The NAD(+) site is built by S173 and F174. H181 is an ATP binding site. NAD(+)-binding residues include T253, G288, D290, W301, R320, and N351. 356 to 359 is a binding site for ATP; it reads TKVR.

Belongs to the eukaryotic NMN adenylyltransferase family. As to quaternary structure, homotetramer. It depends on Ni(2+) as a cofactor.

The protein localises to the cytoplasm. It is found in the nucleus. It carries out the reaction beta-nicotinamide D-ribonucleotide + ATP + H(+) = diphosphate + NAD(+). It catalyses the reaction nicotinate beta-D-ribonucleotide + ATP + H(+) = deamido-NAD(+) + diphosphate. It functions in the pathway cofactor biosynthesis; NAD(+) biosynthesis; deamido-NAD(+) from nicotinate D-ribonucleotide: step 1/1. The protein operates within cofactor biosynthesis; NAD(+) biosynthesis; NAD(+) from nicotinamide D-ribonucleotide: step 1/1. Catalyzes the formation of NAD(+) from nicotinamide mononucleotide (NMN) and ATP. Can also use the deamidated form; nicotinic acid mononucleotide (NaMN) as substrate to form deamido-NAD(+) (NaAD). Key enzyme in both de novo and salvage pathways for NAD(+) biosynthesis. Predominantly acts in the salvage pathways via NMN. The sequence is that of Nicotinamide/nicotinic acid mononucleotide adenylyltransferase 1 from Saccharomyces cerevisiae (strain ATCC 204508 / S288c) (Baker's yeast).